A 485-amino-acid polypeptide reads, in one-letter code: Solute carrier family 35 member F4 (485 aa).

2 stretches are compositionally biased toward polar residues: residues 32–42 (SQKSTTRSSVT) and 50–64 (CPSS…LSPL). 2 disordered regions span residues 32 to 64 (SQKS…LSPL) and 78 to 111 (QSRG…SSQE). Residues 88 to 98 (RRVERQSRSGD) are compositionally biased toward basic and acidic residues. Polar residues predominate over residues 99-111 (DGTQTRPESSSQE). Helical transmembrane passes span 129–149 (IWGL…TQIV), 156–176 (FYCP…FFPV), 217–234 (APFS…LLAL), 241–261 (DVSA…WIVL), 265–285 (FMGV…MMAY), 294–314 (IIGV…KVLF), 329–349 (FVST…IILY), 359–381 (FAAL…NILV), 383–405 (VGVV…PGNA), and 414–434 (VIFN…FLLM). The 61-residue stretch at 225 to 285 (LTNYLYLLAL…AITGIVMMAY (61 aa)) folds into the EamA domain.

This sequence belongs to the SLC35F solute transporter family.

It localises to the membrane. Functionally, putative solute transporter. In Mus musculus (Mouse), this protein is Solute carrier family 35 member F4 (Slc35f4).